The primary structure comprises 130 residues: UPF0102 protein TDE_2303 (130 aa).

This sequence belongs to the UPF0102 family.

This is UPF0102 protein TDE_2303 from Treponema denticola (strain ATCC 35405 / DSM 14222 / CIP 103919 / JCM 8153 / KCTC 15104).